Reading from the N-terminus, the 273-residue chain is Dermonecrotic toxin LspiSicTox-betaIE1ii (273 aa).

Residue His-5 is part of the active site. 2 residues coordinate Mg(2+): Glu-25 and Asp-27. Residue His-41 is the Nucleophile of the active site. 2 disulfides stabilise this stretch: Cys-45–Cys-51 and Cys-47–Cys-189. Asp-85 contacts Mg(2+).

This sequence belongs to the arthropod phospholipase D family. Class II subfamily. Mg(2+) is required as a cofactor. Expressed by the venom gland.

Its subcellular location is the secreted. The catalysed reaction is an N-(acyl)-sphingosylphosphocholine = an N-(acyl)-sphingosyl-1,3-cyclic phosphate + choline. It carries out the reaction an N-(acyl)-sphingosylphosphoethanolamine = an N-(acyl)-sphingosyl-1,3-cyclic phosphate + ethanolamine. The enzyme catalyses a 1-acyl-sn-glycero-3-phosphocholine = a 1-acyl-sn-glycero-2,3-cyclic phosphate + choline. It catalyses the reaction a 1-acyl-sn-glycero-3-phosphoethanolamine = a 1-acyl-sn-glycero-2,3-cyclic phosphate + ethanolamine. Functionally, dermonecrotic toxins cleave the phosphodiester linkage between the phosphate and headgroup of certain phospholipids (sphingolipid and lysolipid substrates), forming an alcohol (often choline) and a cyclic phosphate. This toxin acts on sphingomyelin (SM). It may also act on ceramide phosphoethanolamine (CPE), lysophosphatidylcholine (LPC) and lysophosphatidylethanolamine (LPE), but not on lysophosphatidylserine (LPS), and lysophosphatidylglycerol (LPG). It acts by transphosphatidylation, releasing exclusively cyclic phosphate products as second products. Induces dermonecrosis, hemolysis, increased vascular permeability, edema, inflammatory response, and platelet aggregation. The sequence is that of Dermonecrotic toxin LspiSicTox-betaIE1ii from Loxosceles spinulosa (Recluse spider).